A 705-amino-acid polypeptide reads, in one-letter code: Fatty acid oxidation complex subunit alpha (705 aa).

An enoyl-CoA hydratase region spans residues 1–188; sequence MGKTFNLTRR…KMGLVNDVVP (188 aa). Residues 308–705 form a 3-hydroxyacyl-CoA dehydrogenase region; that stretch reads RKVKKAVILG…AMAAEKARFF (398 aa).

The protein in the N-terminal section; belongs to the enoyl-CoA hydratase/isomerase family. This sequence in the central section; belongs to the 3-hydroxyacyl-CoA dehydrogenase family. In terms of assembly, heterotetramer of two alpha chains (FadJ) and two beta chains (FadI).

The protein localises to the cytoplasm. The enzyme catalyses a (3S)-3-hydroxyacyl-CoA = a (2E)-enoyl-CoA + H2O. It carries out the reaction a 4-saturated-(3S)-3-hydroxyacyl-CoA = a (3E)-enoyl-CoA + H2O. It catalyses the reaction a (3S)-3-hydroxyacyl-CoA + NAD(+) = a 3-oxoacyl-CoA + NADH + H(+). The catalysed reaction is (3S)-3-hydroxybutanoyl-CoA = (3R)-3-hydroxybutanoyl-CoA. Its pathway is lipid metabolism; fatty acid beta-oxidation. Functionally, catalyzes the formation of a hydroxyacyl-CoA by addition of water on enoyl-CoA. Also exhibits 3-hydroxyacyl-CoA epimerase and 3-hydroxyacyl-CoA dehydrogenase activities. The sequence is that of Fatty acid oxidation complex subunit alpha from Shewanella oneidensis (strain ATCC 700550 / JCM 31522 / CIP 106686 / LMG 19005 / NCIMB 14063 / MR-1).